A 432-amino-acid chain; its full sequence is Monoacylglycerol lipase ABHD2 (432 aa).

The Cytoplasmic portion of the chain corresponds to 1–14; sequence MNTHESEVYTVAPE. Residues 15 to 35 traverse the membrane as a helical; Signal-anchor for type II membrane protein segment; that stretch reads MPAMFDGMKLAAVATVLYVIV. At 36–432 the chain is on the extracellular side; sequence RCLNLKSPTA…NQTTCQENTS (397 aa). Positions 132–383 constitute an AB hydrolase-1 domain; it reads TMVICPGIGN…HGGHLGFFEG (252 aa). N141 carries N-linked (GlcNAc...) asparagine glycosylation. The Nucleophile role is filled by S212. N225 is a glycosylation site (N-linked (GlcNAc...) asparagine). Active-site charge relay system residues include D346 and H377. A disordered region spans residues 413–432; it reads PPCQSKDAQSNQTTCQENTS. Polar residues predominate over residues 418–432; the sequence is KDAQSNQTTCQENTS. N-linked (GlcNAc...) asparagine glycosylation occurs at N423.

The protein belongs to the AB hydrolase superfamily. AB hydrolase 4 family.

The protein localises to the cell membrane. It catalyses the reaction Hydrolyzes glycerol monoesters of long-chain fatty acids.. The enzyme catalyses an acetyl ester + H2O = an aliphatic alcohol + acetate + H(+). It carries out the reaction a triacylglycerol + H2O = a diacylglycerol + a fatty acid + H(+). The catalysed reaction is 2-(5Z,8Z,11Z,14Z-eicosatetraenoyl)-glycerol + H2O = glycerol + (5Z,8Z,11Z,14Z)-eicosatetraenoate + H(+). It catalyses the reaction a butanoate ester + H2O = an aliphatic alcohol + butanoate + H(+). The enzyme catalyses hexadecanoate ester + H2O = an aliphatic alcohol + hexadecanoate + H(+). Its activity is regulated as follows. Acylglycerol lipase activity is activated upon binding to progesterone. In terms of biological role, progesterone-dependent acylglycerol lipase that catalyzes hydrolysis of endocannabinoid arachidonoylglycerol (AG) from cell membrane. Acts as a progesterone receptor: progesterone-binding activates the acylglycerol lipase activity, mediating degradation of 1-arachidonoylglycerol (1AG) and 2-arachidonoylglycerol (2AG) to glycerol and arachidonic acid (AA). Also displays an ester hydrolase activity against acetyl ester, butanoate ester and hexadecanoate ester. Plays a key role in sperm capacitation in response to progesterone by mediating degradation of 2AG, an inhibitor of the sperm calcium channel CatSper, leading to calcium influx via CatSper and sperm activation. May also play a role in smooth muscle cells migration. This Danio rerio (Zebrafish) protein is Monoacylglycerol lipase ABHD2 (abhd2a).